A 169-amino-acid chain; its full sequence is Cell division inhibitor SulA (169 aa).

The tract at residues 1–22 is disordered; the sequence is MHTSIYANRSTSFSPSAGNDTQ. Residues 106–112 form a ftsZ binding region; sequence ALRTGNY. Residues 162–169 form a lon protease binding region; sequence KIHSNLYH.

This sequence belongs to the SulA family. In terms of assembly, interacts with FtsZ. In terms of processing, is rapidly cleaved and degraded by the Lon protease once DNA damage is repaired.

In terms of biological role, component of the SOS system and an inhibitor of cell division. Accumulation of SulA causes rapid cessation of cell division and the appearance of long, non-septate filaments. In the presence of GTP, binds a polymerization-competent form of FtsZ in a 1:1 ratio, thus inhibiting FtsZ polymerization and therefore preventing it from participating in the assembly of the Z ring. This mechanism prevents the premature segregation of damaged DNA to daughter cells during cell division. This is Cell division inhibitor SulA from Enterobacter sp. (strain 638).